The sequence spans 614 residues: Vitamin B12 transporter BtuB (614 aa).

A signal peptide spans M1 to A20. The short motif at D26 to N33 is the TonB box element. Residues P38 to T152 enclose the TBDR plug domain. Residues L83, S85, N92, and V110–S111 contribute to the cyanocob(III)alamin site. In terms of domain architecture, TBDR beta-barrel spans E155 to F614. A run of 3 beta stranded transmembrane segments spans residues T158 to G165, Y169 to Q178, and T184 to T195. 4 residues coordinate Ca(2+): D199, Q211, D213, and D215. Transmembrane regions (beta stranded) follow at residues F217–E227 and D232–N248. 2 residues coordinate Ca(2+): Y249 and D250. A251 lines the cyanocob(III)alamin pocket. A Ca(2+)-binding site is contributed by D261. A run of 14 beta stranded transmembrane segments spans residues R263–N277, E279–N296, T309–I325, H328–W337, Y353–G369, F371–D381, F385–I400, Y403–N417, K434–E443, V449–N458, Y473–F490, P494–A509, R517–W529, and D535–D550. T309 contributes to the cyanocob(III)alamin binding site. Position 517 (R517) interacts with cyanocob(III)alamin. Y551 contributes to the cyanocob(III)alamin binding site. 3 beta stranded membrane-spanning segments follow: residues T558–A572, I585–V596, and A602–F614. The TonB C-terminal box motif lies at Y597–F614.

Belongs to the TonB-dependent receptor family. BtuB (TC 1.B.14.3.1) subfamily.

The protein localises to the cell outer membrane. In terms of biological role, involved in the active translocation of vitamin B12 (cyanocobalamin) across the outer membrane to the periplasmic space. It derives its energy for transport by interacting with the trans-periplasmic membrane protein TonB. The sequence is that of Vitamin B12 transporter BtuB from Escherichia coli O9:H4 (strain HS).